Here is an 815-residue protein sequence, read N- to C-terminus: MGNSPSTQDPSHSTKKEHGHHFHDAFNKDRQGSITSQLFNNRKSTHKRRASHTSEHNGAIPPRMQLLASHDPSTDCDGRMSSDTTIDKGPSHLFKKDYSLSSAADVNDTTLANLTLSDDHDVGAPEEQVKSPSFLSPGPSMATVKRTKSDLDDLSTLNYTMVDETTENERNDKPHHERHRSSIIALKKNLLESSATASPSPTRSSSVHSASLPALTKTDSIDIPVRQPYSKKPSIHAYQYQYLNNDETFSENSQMDKEGNSDSVDAEAGVLQSEDMVLNQSLLQNALKKDMQRLSRVNSSNSMYTAERISHANNNGNIENNTRNKGNAGGSNDDFTAPISATAKMMMKLYGDKTLMERDLNKHHNKTKKAQNKKIRSVSNSRRSSFASLHSLQSRKSILTNGLNLQPLHPLHPIINDNESQYSAPQHREISHHSNSMSSMSSISSTNSTENTLVVLKWKDDGTVAATTEVFIVSTDIASALKEQRELTLDENASLDSEKQLNPRIRMVYDDVHKEWFVPDLFLPAGIYRLQFSINGILTHSNFLPTATDSEGNFVNWFEVLPGYHTIEPFRNEADIDSQVEPTLDEELPKRPELKRFPSSSRKSSYYSAKGVERPSTPFSDYRGLSRSSSINMRDSFVRLKASSLDLMAEVKPERLVYSNEIPNLFNIGDGSTISVKGDSDDVHPQEPPSFTHRVVDCNQDDLFATLQQGGNIDAETAEAVFLSRYPVPDLPIYLNSSYLNRILNQSNQNSESHERDEGAINHIIPHVNLNHLLTSSIRDEIISVACTTRYEGKFITQVVYAPCYYKTQKSQISN.

The span at 1 to 11 (MGNSPSTQDPS) shows a compositional bias: polar residues. Disordered stretches follow at residues 1 to 88 (MGNS…TIDK) and 117 to 146 (SDDH…TVKR). A lipid anchor (N-myristoyl glycine) is attached at G2. A compositionally biased stretch (basic and acidic residues) spans 12–31 (HSTKKEHGHHFHDAFNKDRQ). The segment covering 32 to 42 (GSITSQLFNNR) has biased composition (polar residues). S33 is subject to Phosphoserine. 2 stretches are compositionally biased toward basic and acidic residues: residues 72-88 (PSTD…TIDK) and 117-129 (SDDH…EEQV). Phosphoserine occurs at positions 181, 198, 200, 206, 209, and 220. Disordered regions lie at residues 311-335 (HANN…NDDF) and 362-389 (KHHN…FASL). A compositionally biased stretch (low complexity) spans 313 to 326 (NNNGNIENNTRNKG). Position 331 is a phosphoserine (S331). Residues 363-376 (HHNKTKKAQNKKIR) are compositionally biased toward basic residues. Low complexity predominate over residues 377-389 (SVSNSRRSSFASL). A kinase-interacting sequence (KIS); required for interaction with SNF1 region spans residues 473–716 (VSTDIASALK…LQQGGNIDAE (244 aa)). 2 positions are modified to phosphoserine: S494 and S497. Residues 581–616 (EPTLDEELPKRPELKRFPSSSRKSSYYSAKGVERPS) form a disordered region. The span at 587-596 (ELPKRPELKR) shows a compositional bias: basic and acidic residues. Residues 599-608 (SSSRKSSYYS) are compositionally biased toward low complexity. S643 carries the phosphoserine modification. Residues 724–804 (SRYPVPDLPI…FITQVVYAPC (81 aa)) are association with SNF1 kinase complex (ASC) domain; required for interaction with SNF4.

This sequence belongs to the 5'-AMP-activated protein kinase beta subunit family. As to quaternary structure, component of the SNF1 kinase complex, a heterotrimeric complex composed of the catalytic alpha subunit SNF1, one of the three related beta subunits SIP1, SIP2 or GAL83, and the regulatory gamma subunit SNF4. The beta subunit serves as a bridge between the catalytic and the regulatory subunit. Interacts (via KIS domain) with SNF1. Interacts (via ASC domain) with SNF4. Post-translationally, phosphorylated by SNF1 in vitro.

The protein resides in the cytoplasm. The protein localises to the vacuole membrane. In terms of biological role, beta subunit of the SNF1 kinase complex, which is required for transcriptional, metabolic, and developmental adaptations in response to glucose limitation. Has a structural role, mediating heterotrimer formation, and a regulatory role, defining carbon source-regulated subcellular location and substrate specificity of the SNF1 kinase complex. Promotes the PKA-regulated relocalization of the SNF1 kinase complex to the vacuolar membrane in response to various types of carbon stress. The sequence is that of SNF1 protein kinase subunit beta-1 (SIP1) from Saccharomyces cerevisiae (strain ATCC 204508 / S288c) (Baker's yeast).